A 470-amino-acid chain; its full sequence is Light-independent protochlorophyllide reductase subunit N (470 aa).

[4Fe-4S] cluster-binding residues include Cys22, Cys47, and Cys107.

Belongs to the BchN/ChlN family. Protochlorophyllide reductase is composed of three subunits; ChlL, ChlN and ChlB. Forms a heterotetramer of two ChlB and two ChlN subunits. It depends on [4Fe-4S] cluster as a cofactor.

It localises to the plastid. The protein resides in the chloroplast. The catalysed reaction is chlorophyllide a + oxidized 2[4Fe-4S]-[ferredoxin] + 2 ADP + 2 phosphate = protochlorophyllide a + reduced 2[4Fe-4S]-[ferredoxin] + 2 ATP + 2 H2O. It participates in porphyrin-containing compound metabolism; chlorophyll biosynthesis (light-independent). In terms of biological role, component of the dark-operative protochlorophyllide reductase (DPOR) that uses Mg-ATP and reduced ferredoxin to reduce ring D of protochlorophyllide (Pchlide) to form chlorophyllide a (Chlide). This reaction is light-independent. The NB-protein (ChlN-ChlB) is the catalytic component of the complex. In Pinus koraiensis (Korean pine), this protein is Light-independent protochlorophyllide reductase subunit N.